A 275-amino-acid chain; its full sequence is 4-diphosphocytidyl-2-C-methyl-D-erythritol kinase (275 aa).

Lys-14 is an active-site residue. ATP is bound at residue 98–108 (PMGAGLGGGSS). The active site involves Asp-140.

The protein belongs to the GHMP kinase family. IspE subfamily.

The catalysed reaction is 4-CDP-2-C-methyl-D-erythritol + ATP = 4-CDP-2-C-methyl-D-erythritol 2-phosphate + ADP + H(+). It participates in isoprenoid biosynthesis; isopentenyl diphosphate biosynthesis via DXP pathway; isopentenyl diphosphate from 1-deoxy-D-xylulose 5-phosphate: step 3/6. Functionally, catalyzes the phosphorylation of the position 2 hydroxy group of 4-diphosphocytidyl-2C-methyl-D-erythritol. This is 4-diphosphocytidyl-2-C-methyl-D-erythritol kinase from Francisella tularensis subsp. tularensis (strain FSC 198).